Here is a 440-residue protein sequence, read N- to C-terminus: Ribosomal protein uS12 methylthiotransferase RimO (440 aa).

Positions 7 to 117 (PKISFVSLGC…VLDAVHRALP (111 aa)) constitute an MTTase N-terminal domain. [4Fe-4S] cluster-binding residues include C16, C52, C81, C148, C152, and C155. Residues 134–370 (LTPRHYAYLK…MARQQKISAQ (237 aa)) enclose the Radical SAM core domain. Positions 373–439 (KRKVGTRQQV…EYDLHGSVAG (67 aa)) constitute a TRAM domain.

The protein belongs to the methylthiotransferase family. RimO subfamily. [4Fe-4S] cluster serves as cofactor.

The protein localises to the cytoplasm. It catalyses the reaction L-aspartate(89)-[ribosomal protein uS12]-hydrogen + (sulfur carrier)-SH + AH2 + 2 S-adenosyl-L-methionine = 3-methylsulfanyl-L-aspartate(89)-[ribosomal protein uS12]-hydrogen + (sulfur carrier)-H + 5'-deoxyadenosine + L-methionine + A + S-adenosyl-L-homocysteine + 2 H(+). Functionally, catalyzes the methylthiolation of an aspartic acid residue of ribosomal protein uS12. This chain is Ribosomal protein uS12 methylthiotransferase RimO, found in Afipia carboxidovorans (strain ATCC 49405 / DSM 1227 / KCTC 32145 / OM5) (Oligotropha carboxidovorans).